The primary structure comprises 1366 residues: ABC multidrug transporter MDR2 (1366 aa).

Residues Ile-52–Leu-72 traverse the membrane as a helical segment. In terms of domain architecture, ABC transmembrane type-1 1 spans Val-56 to Ser-354. Residue Asn-84 is glycosylated (N-linked (GlcNAc...) asparagine). A run of 5 helical transmembrane segments spans residues Val-106–Cys-126, Lys-180–Leu-200, Val-202–Gly-222, Ile-288–Gly-308, and Val-323–Ser-343. The region spanning Ile-390–Leu-669 is the ABC transporter 1 domain. Gly-425 to Ser-432 lines the ATP pocket. Asn-620 is a glycosylation site (N-linked (GlcNAc...) asparagine). Residues Pro-727–Gln-746 are disordered. 4 helical membrane-spanning segments follow: residues Leu-768–Gly-788, Gly-807–Val-827, Leu-868–Ile-888, and Leu-898–Ala-918. The region spanning Leu-768–Lys-1055 is the ABC transmembrane type-1 2 domain. Asn-976 is a glycosylation site (N-linked (GlcNAc...) asparagine). A run of 2 helical transmembrane segments spans residues Phe-995–Gly-1015 and Ile-1019–Ser-1039. The ABC transporter 2 domain occupies Val-1122–His-1361. Gly-1157 to Ser-1164 is an ATP binding site.

The protein belongs to the ABC transporter superfamily. ABCB family. Multidrug resistance exporter (TC 3.A.1.201) subfamily.

It localises to the cell membrane. In terms of biological role, pleiotropic ABC efflux transporter that may be involved in the modulation susceptibility to a wide range of unrelated cytotoxic compounds. Does not act as an efflux pump for azoles, including fluconazole, itraconazole, ketoconazole, miconazole and voriconazole, nor does it modulate susceptibility to cycloheximide. This chain is ABC multidrug transporter MDR2, found in Trichophyton rubrum (strain ATCC MYA-4607 / CBS 118892) (Athlete's foot fungus).